A 247-amino-acid polypeptide reads, in one-letter code: DNA polymerase sliding clamp 1 (247 aa).

It belongs to the PCNA family. As to quaternary structure, homotrimer. The subunits circularize to form a toroid; DNA passes through its center. Replication factor C (RFC) is required to load the toroid on the DNA.

Sliding clamp subunit that acts as a moving platform for DNA processing. Responsible for tethering the catalytic subunit of DNA polymerase and other proteins to DNA during high-speed replication. The chain is DNA polymerase sliding clamp 1 from Sulfolobus acidocaldarius (strain ATCC 33909 / DSM 639 / JCM 8929 / NBRC 15157 / NCIMB 11770).